The chain runs to 134 residues: ATP synthase epsilon chain (134 aa).

This sequence belongs to the ATPase epsilon chain family. F-type ATPases have 2 components, CF(1) - the catalytic core - and CF(0) - the membrane proton channel. CF(1) has five subunits: alpha(3), beta(3), gamma(1), delta(1), epsilon(1). CF(0) has three main subunits: a, b and c. In this bacterium the a and b subunits are transcribed but do not seem to be translated, thus the ATP synthase consists of the alpha, beta, gamma, delta, epsilon and c subunits.

The protein resides in the cell membrane. Produces ATP from ADP in the presence of a proton gradient across the membrane. The protein is ATP synthase epsilon chain of Moorella thermoacetica (strain ATCC 39073 / JCM 9320).